The primary structure comprises 354 residues: D-alanine--D-alanine ligase (354 aa).

In terms of domain architecture, ATP-grasp spans 154-348 (RSWFLTNNIN…FTNLIEEIIK (195 aa)). 181–232 (MKRPYVIKPITQGSSIGIEVIFEEDDFNFANYDFPYGDQVIIEKYIKGRELQ) contributes to the ATP binding site. Mg(2+)-binding residues include glutamate 301, glutamate 315, and asparagine 317.

It belongs to the D-alanine--D-alanine ligase family. It depends on Mg(2+) as a cofactor. Mn(2+) is required as a cofactor.

Its subcellular location is the cytoplasm. It catalyses the reaction 2 D-alanine + ATP = D-alanyl-D-alanine + ADP + phosphate + H(+). Its pathway is cell wall biogenesis; peptidoglycan biosynthesis. Functionally, cell wall formation. This chain is D-alanine--D-alanine ligase, found in Rickettsia canadensis (strain McKiel).